Here is a 3291-residue protein sequence, read N- to C-terminus: Protocadherin-16 (3291 aa).

Positions 1–35 (MQEELSVALSCPGMKSLGTLLPLLVLLGTTVPGIR) are cleaved as a signal peptide. Residues 36-2933 (GQAGSLDLQI…PDLNLLLVGA (2898 aa)) are Extracellular-facing. 27 Cadherin domains span residues 37 to 137 (QAGS…APAF), 138 to 249 (PQAR…APAF), 250 to 356 (NQSR…QPSM), 369 to 466 (VSEA…APAF), 476 to 572 (LPEV…EPQF), 573 to 679 (QRTF…PPQF), 680 to 784 (YPRE…PPIF), 785 to 888 (EQLQ…SPAF), 889 to 994 (PAPE…APRF), 995 to 1105 (DSPT…EPTF), 1100 to 1205 (SEEP…SPTF), 1218 to 1317 (IQVP…SPDL), 1326 to 1429 (VPVV…APAF), 1430 to 1539 (ARDP…APVF), 1539 to 1642 (FASP…APAF), 1643 to 1744 (PQQE…SPTF), 1745 to 1848 (GNTH…APAF), 1849 to 1953 (PVPS…APAF), 1976 to 2061 (LATL…GPRF), 2062 to 2164 (PRAN…APRF), 2165 to 2270 (LQPH…RPTI), 2270 to 2369 (IPQP…VPIF), 2370 to 2475 (SQSL…APSF), 2476 to 2595 (TLPH…PPVF), 2596 to 2699 (TRAS…GPAF), 2700 to 2806 (PLSL…DPVF), and 2807 to 2926 (LAPS…APDL). A glycan (N-linked (GlcNAc...) asparagine) is linked at asparagine 396. Positions 951-971 (GPPGGPPHELEVEAQDGGSPP) are disordered. N-linked (GlcNAc...) asparagine glycosylation is present at asparagine 1711. A glycan (N-linked (GlcNAc...) asparagine) is linked at asparagine 2354. N-linked (GlcNAc...) asparagine glycosylation occurs at asparagine 2562. A helical membrane pass occupies residues 2934–2954 (VAASLGVVVVLALAALVLGLV). Residues 2955-3291 (RARSRKAEAA…EPPDDTELRI (337 aa)) lie on the Cytoplasmic side of the membrane. The disordered stretch occupies residues 2978–3033 (SLQKLGREPPSPPPSEHLYHQTLPSYGGPGAGGPYPRGGSLDPSHSSGRGSAEAAE). A compositionally biased stretch (gly residues) spans 3004–3013 (GGPGAGGPYP). Phosphoserine is present on serine 3048. Disordered regions lie at residues 3051–3080 (SSLA…PAPD) and 3226–3291 (ASHR…ELRI). Over residues 3237–3259 (SLSSAAMSPSFSPSLSPLAARSP) the composition is skewed to low complexity. Residues 3270–3279 (PSASALSTES) show a composition bias toward polar residues.

Heterophilic interaction with FAT4; this interaction affects their respective protein levels.

The protein localises to the cell membrane. Its function is as follows. Calcium-dependent cell-adhesion protein. Mediates functions in neuroprogenitor cell proliferation and differentiation. This Rattus norvegicus (Rat) protein is Protocadherin-16 (Dchs1).